Consider the following 446-residue polypeptide: tRNA-2-methylthio-N(6)-dimethylallyladenosine synthase (446 aa).

In terms of domain architecture, MTTase N-terminal spans 6 to 122 (RRYHITTFGC…LGDLLQQVFD (117 aa)). [4Fe-4S] cluster contacts are provided by C15, C51, C85, C157, C161, and C164. The region spanning 143–380 (RDSNITAWVN…NHLVATKAAE (238 aa)) is the Radical SAM core domain. The TRAM domain occupies 383 to 446 (QRYLGRIEEI…RPFSLTGVIF (64 aa)).

Belongs to the methylthiotransferase family. MiaB subfamily. As to quaternary structure, monomer. [4Fe-4S] cluster serves as cofactor.

Its subcellular location is the cytoplasm. It carries out the reaction N(6)-dimethylallyladenosine(37) in tRNA + (sulfur carrier)-SH + AH2 + 2 S-adenosyl-L-methionine = 2-methylsulfanyl-N(6)-dimethylallyladenosine(37) in tRNA + (sulfur carrier)-H + 5'-deoxyadenosine + L-methionine + A + S-adenosyl-L-homocysteine + 2 H(+). Catalyzes the methylthiolation of N6-(dimethylallyl)adenosine (i(6)A), leading to the formation of 2-methylthio-N6-(dimethylallyl)adenosine (ms(2)i(6)A) at position 37 in tRNAs that read codons beginning with uridine. This is tRNA-2-methylthio-N(6)-dimethylallyladenosine synthase from Microcystis aeruginosa (strain NIES-843 / IAM M-2473).